The following is a 414-amino-acid chain: MKTYLVGGAVRDSLLEIPVVDRDWVVVGAAPSELTALGYQQVGKDFPVFLNPKTHEEYALARTERKSGQGYTGFTCYAAPDVTLEEDLQRRDLTINAIARSDDGELIDPFNGVADLQARVLRHVSDAFGEDPLRVLRVARFAARFAHLGFSIAPETAELMRQMARSGELAALTAERVWKETEKALQSQSPQVYFQVLRDCEALGVLFPEIDTLFGVPAPAKWHPEIDTGIHTLMTLAIAAQLSPEVDVRFSALCHDLGKGQTPKELWPHHHGHGPAGVLLVEALCRRLRVPNPVRDLAKLVAEYHDLIHTVNKLRPETLLKLFDAVDVWRKPQRLEQMILTSEADARGRTGFEDNPYPQGDYLRQAFQVANAVSVKEVVASGLQGLAVRDELKRRRQQALAEWKQTQDIPLDQA.

ATP contacts are provided by G8 and R11. The CTP site is built by G8 and R11. D21 and D23 together coordinate Mg(2+). 3 residues coordinate ATP: R91, R137, and R140. CTP is bound by residues R91, R137, and R140. The HD domain maps to 228-329 (TGIHTLMTLA…LKLFDAVDVW (102 aa)).

It belongs to the tRNA nucleotidyltransferase/poly(A) polymerase family. Bacterial CCA-adding enzyme type 1 subfamily. In terms of assembly, monomer. Can also form homodimers and oligomers. Mg(2+) is required as a cofactor. Requires Ni(2+) as cofactor.

It catalyses the reaction a tRNA precursor + 2 CTP + ATP = a tRNA with a 3' CCA end + 3 diphosphate. The catalysed reaction is a tRNA with a 3' CCA end + 2 CTP + ATP = a tRNA with a 3' CCACCA end + 3 diphosphate. Its function is as follows. Catalyzes the addition and repair of the essential 3'-terminal CCA sequence in tRNAs without using a nucleic acid template. Adds these three nucleotides in the order of C, C, and A to the tRNA nucleotide-73, using CTP and ATP as substrates and producing inorganic pyrophosphate. tRNA 3'-terminal CCA addition is required both for tRNA processing and repair. Also involved in tRNA surveillance by mediating tandem CCA addition to generate a CCACCA at the 3' terminus of unstable tRNAs. While stable tRNAs receive only 3'-terminal CCA, unstable tRNAs are marked with CCACCA and rapidly degraded. This is Multifunctional CCA protein from Serratia proteamaculans (strain 568).